The following is a 200-amino-acid chain: Imidazole glycerol phosphate synthase subunit HisH (200 aa).

In terms of domain architecture, Glutamine amidotransferase type-1 spans 2–200; that stretch reads KVAIVEYGVG…LGEVLTGASR (199 aa). Catalysis depends on Cys79, which acts as the Nucleophile. Residues His179 and Glu181 contribute to the active site.

As to quaternary structure, heterodimer of HisH and HisF.

Its subcellular location is the cytoplasm. It catalyses the reaction 5-[(5-phospho-1-deoxy-D-ribulos-1-ylimino)methylamino]-1-(5-phospho-beta-D-ribosyl)imidazole-4-carboxamide + L-glutamine = D-erythro-1-(imidazol-4-yl)glycerol 3-phosphate + 5-amino-1-(5-phospho-beta-D-ribosyl)imidazole-4-carboxamide + L-glutamate + H(+). The catalysed reaction is L-glutamine + H2O = L-glutamate + NH4(+). The protein operates within amino-acid biosynthesis; L-histidine biosynthesis; L-histidine from 5-phospho-alpha-D-ribose 1-diphosphate: step 5/9. Its function is as follows. IGPS catalyzes the conversion of PRFAR and glutamine to IGP, AICAR and glutamate. The HisH subunit catalyzes the hydrolysis of glutamine to glutamate and ammonia as part of the synthesis of IGP and AICAR. The resulting ammonia molecule is channeled to the active site of HisF. The chain is Imidazole glycerol phosphate synthase subunit HisH from Methanopyrus kandleri (strain AV19 / DSM 6324 / JCM 9639 / NBRC 100938).